The following is a 215-amino-acid chain: Cytochrome b6 (215 aa).

Residues 32–52 form a helical membrane-spanning segment; that stretch reads IFYCLGGITLTCFLVQVASGF. Cysteine 35 is a binding site for heme c. Residues histidine 86 and histidine 100 each coordinate heme b. 3 helical membrane-spanning segments follow: residues 90–110, 116–136, and 186–206; these read ASMM…TGGF, LTWV…VTGY, and LHTF…FLMI. The heme b site is built by histidine 187 and histidine 202.

It belongs to the cytochrome b family. PetB subfamily. As to quaternary structure, the 4 large subunits of the cytochrome b6-f complex are cytochrome b6, subunit IV (17 kDa polypeptide, PetD), cytochrome f and the Rieske protein, while the 4 small subunits are PetG, PetL, PetM and PetN. The complex functions as a dimer. Heme b is required as a cofactor. The cofactor is heme c.

The protein resides in the plastid. It is found in the chloroplast thylakoid membrane. In terms of biological role, component of the cytochrome b6-f complex, which mediates electron transfer between photosystem II (PSII) and photosystem I (PSI), cyclic electron flow around PSI, and state transitions. The polypeptide is Cytochrome b6 (Anthoceros angustus (Hornwort)).